Here is a 276-residue protein sequence, read N- to C-terminus: Plant cysteine oxidase 2 (276 aa).

Positions M1–K40 are disordered. Positions K17–R28 are enriched in polar residues. Over residues N30–K40 the composition is skewed to basic residues. Residues H134, H136, and H197 each contribute to the Fe cation site.

Belongs to the cysteine dioxygenase family. It depends on Fe(2+) as a cofactor.

Its subcellular location is the nucleus. The protein localises to the cytoplasm. The catalysed reaction is L-cysteine + O2 = 3-sulfino-L-alanine + H(+). Functionally, catalyzes the oxidation of N-terminal cysteine residues (N-Cys), thus preparing the protein for N-end rule pathway-mediated proteasomal degradation, upstream of the N-end rule enzymes ATE1, ATE2 and PRT6. Controls the preparation of the group VII ethylene response factor (ERF-VII) proteins for degradation via the 26S proteasome N-end rule pathway. Acts as an oxygen sensor that controls the stability of ERF-VII proteins, which are stabilized in flooding-induced hypoxia, and regulate transcriptional adaptation to these adverse conditions. Not active on Cys located inside or at the C-terminus of a peptide. Acts redundantly with PCO1 to repress the anaerobic response. In Arabidopsis thaliana (Mouse-ear cress), this protein is Plant cysteine oxidase 2.